Here is a 121-residue protein sequence, read N- to C-terminus: Large ribosomal subunit protein bL12 (121 aa).

This sequence belongs to the bacterial ribosomal protein bL12 family. Homodimer. Part of the ribosomal stalk of the 50S ribosomal subunit. Forms a multimeric L10(L12)X complex, where L10 forms an elongated spine to which 2 to 4 L12 dimers bind in a sequential fashion. Binds GTP-bound translation factors.

Forms part of the ribosomal stalk which helps the ribosome interact with GTP-bound translation factors. Is thus essential for accurate translation. The protein is Large ribosomal subunit protein bL12 of Anoxybacillus flavithermus (strain DSM 21510 / WK1).